We begin with the raw amino-acid sequence, 326 residues long: L-lactate dehydrogenase (326 aa).

39-60 (DVVTGMPEGKALDDSQATSIAD) provides a ligand contact to NAD(+). Substrate-binding residues include arginine 99, asparagine 131, and arginine 162. Asparagine 131 lines the NAD(+) pocket. Histidine 186 functions as the Proton acceptor in the catalytic mechanism.

It belongs to the LDH/MDH superfamily. LDH family. As to quaternary structure, homotetramer.

The enzyme catalyses (S)-lactate + NAD(+) = pyruvate + NADH + H(+). It functions in the pathway fermentation; pyruvate fermentation to lactate; (S)-lactate from pyruvate: step 1/1. This is L-lactate dehydrogenase from Toxoplasma gondii.